A 205-amino-acid chain; its full sequence is Ribosomal RNA large subunit methyltransferase E (205 aa).

Residues Gly60, Trp62, Asp80, Asp96, and Asp121 each coordinate S-adenosyl-L-methionine. Catalysis depends on Lys161, which acts as the Proton acceptor.

This sequence belongs to the class I-like SAM-binding methyltransferase superfamily. RNA methyltransferase RlmE family.

Its subcellular location is the cytoplasm. The catalysed reaction is uridine(2552) in 23S rRNA + S-adenosyl-L-methionine = 2'-O-methyluridine(2552) in 23S rRNA + S-adenosyl-L-homocysteine + H(+). In terms of biological role, specifically methylates the uridine in position 2552 of 23S rRNA at the 2'-O position of the ribose in the fully assembled 50S ribosomal subunit. The polypeptide is Ribosomal RNA large subunit methyltransferase E (Azoarcus sp. (strain BH72)).